We begin with the raw amino-acid sequence, 152 residues long: Perlwapin (152 aa).

An N-terminal signal peptide occupies residues 1-18 (LILCVVVCTAAVLGTAAG). A WAP 1 domain is found at 19 to 61 (YESQLPGCPPGAYPAICARYCYSDRDCASGYYCCNTGCLNICV). Cystine bridges form between C26/C52, C35/C56, C39/C51, C45/C60, C69/C95, C77/C100, C82/C94, C88/C103, C112/C139, C122/C142, C126/C138, and C132/C146. The WAP 2; atypical domain occupies 62–107 (PKPKPGLCPSITQSPCRGNVCNNDQDCPGNRKCCGKPGCKRCYRPK). The WAP 3 domain occupies 108 to 150 (KPGSCPARKYEAGPCVVYCDGDFDCPGDKKCCGGCPRLCEKPC).

In terms of tissue distribution, component of the acid-soluble and acid-insoluble organic matrix of prismatic shell layers (at protein level).

The protein localises to the secreted. Functionally, inhibits growth of calcium carbonate crystals. May inhibit growth of certain crystallographic planes in the mineral phase of nacre in the shell. This chain is Perlwapin, found in Haliotis asinina (Donkey's ear abalone).